The primary structure comprises 70 residues: Putative membrane protein insertion efficiency factor (70 aa).

This sequence belongs to the UPF0161 family.

The protein resides in the cell membrane. In terms of biological role, could be involved in insertion of integral membrane proteins into the membrane. The protein is Putative membrane protein insertion efficiency factor of Rubrobacter xylanophilus (strain DSM 9941 / JCM 11954 / NBRC 16129 / PRD-1).